The chain runs to 395 residues: Zinc-regulated GTPase metalloprotein activator 1F (395 aa).

The segment at 1–22 (MLPAVGSVDEEEDPAEEDCPEL) is disordered. A compositionally biased stretch (acidic residues) spans 8 to 20 (VDEEEDPAEEDCP). The short motif at 17–24 (EDCPELVP) is the psi-PxLVp motif element. 49–56 (GYLGAGKT) contacts GTP. Cysteine 107, cysteine 109, and cysteine 110 together coordinate Zn(2+). Residues 107–110 (CLCC) carry the CXCC motif motif. Residues 110–114 (CSVKD) and 203–206 (NKTD) each bind GTP. The CobW C-terminal domain occupies 274–377 (IVTITFDVPG…ILKQLFIATV (104 aa)).

The protein belongs to the SIMIBI class G3E GTPase family. ZNG1 subfamily.

The protein localises to the nucleus. It carries out the reaction GTP + H2O = GDP + phosphate + H(+). Zinc chaperone that directly transfers zinc cofactor to target metalloproteins, thereby activating them. Catalyzes zinc insertion into the active site of methionine aminopeptidase METAP1, which function to cleave the initiator methionine from polypeptides during or after protein translation. Mechanistically, the N-terminal psi-PxLVp motif binds to the C6H2-type zinc finger of inactive form of METAP1. After formation of the docked complex, zinc is transferred from the CXCC motif in the GTPase domain of ZNG1F to the zinc binding site in the peptidase domain of METAP1 in a process requiring GTP hydrolysis. GTP/GDP exchange is required for release of active METAP1. The polypeptide is Zinc-regulated GTPase metalloprotein activator 1F (Homo sapiens (Human)).